Reading from the N-terminus, the 9439-residue chain is Extracellular matrix-binding protein ebh (9439 aa).

FIVAR domains are found at residues 1815–1871 (ARRR…VNSA), 1901–1957 (AKEQ…INDA), 1985–2041 (AYDT…VRDA), 2071–2127 (AKKR…ITSE), 2155–2211 (AYNK…VTQA), 2241–2297 (AKNR…ISSE), 2325–2381 (AYNK…VEDA), 2411–2467 (AKEK…ITEN), 2488–2551 (DTTS…VNNA), 2581–2638 (ARNR…STEI), 2665–2720 (AKNQ…IRTN), 2748–2804 (AKTA…VSDE), 2832–2888 (AYNQ…VNNA), 2918–2974 (AKEQ…ISNA), 3002–3058 (AYNQ…VTAA), 3088–3144 (AKQQ…ITNE), 3172–3228 (AYNQ…VAQA), 3258–3314 (AKNQ…ISDE), 3335–3398 (DTTE…VNNA), 3428–3484 (ARLN…ITTE), 3512–3567 (AKTA…IKTN), 3595–3650 (IKRQ…VKES), 3678–3733 (AKNR…IRQN), 3802–3860 (SMTA…IDQK), 3928–3983 (AMTQ…LDPA), 4056–4114 (AMQA…VNQK), 4182–4240 (SMGT…VDNA), 4308–4365 (AMHT…INQK), and 4433–4491 (VMEQ…IEQA). Residues 2495–2507 (EVRKLSRRGDTNN) are compositionally biased toward basic and acidic residues. The segment at 2495 to 2514 (EVRKLSRRGDTNNKKPSSVS) is disordered. A compositionally biased stretch (polar residues) spans 2925–2938 (AVDQVPSTEGMTQQ). A disordered region spans residues 2925 to 2951 (AVDQVPSTEGMTQQTKDDYNSKQQAAQ). Residues 4522–4542 (LSGLTNEQKPKENQAVNGAQT) form a disordered region. Residues 4559 to 4617 (SMQTLRDLVNNQNAIHSTSNYFNEDSTQKNTYDNAIDNGSTYITGQHNPELNKSTIDQT) enclose the FIVAR 30 domain. The interval 4648 to 4671 (LGYLNDPQKSGEESLVNGSNTRSE) is disordered. 14 FIVAR domains span residues 4685–4743 (AMKQ…IEQK), 4811–4869 (AMQA…IEQA), 4937–4995 (AMSN…IEQA), 5063–5115 (AMEA…VLDK), 5189–5246 (AMLG…INQL), 5314–5372 (LMGA…VTTA), 5440–5498 (AMGE…IDQA), 5566–5624 (AMKK…ITNA), 5692–5750 (AMKQ…IADT), 5818–5875 (DMST…LQDL), 5943–6000 (AMKA…IKQA), 6068–6126 (KMEE…INRT), 6194–6252 (AMQQ…IQAI), and 6320–6378 (EMGT…IADA). The span at 5699–5712 (QVNQDDQISNSSPF) shows a compositional bias: polar residues. Residues 5699–5719 (QVNQDDQISNSSPFINEDSDK) are disordered. The disordered stretch occupies residues 6413–6434 (NNSQRQSEHDEINSAPSRTEVS). 18 FIVAR domains span residues 6446 to 6504 (AMRQ…IEDA), 6572 to 6630 (AMKA…INRA), 6698 to 6755 (SMNQ…IDQA), 6823 to 6877 (TMKA…ANDE), 6949 to 7007 (AMKK…INTI), 7075 to 7133 (SMNT…VERA), 7201 to 7259 (DMKK…IENA), 7327 to 7384 (AMKH…IKQL), 7452 to 7510 (AMEN…IEHA), 7578 to 7636 (AMKA…INSI), 7704 to 7762 (AMET…VDIV), 7830 to 7888 (AMKS…VRQA), 7956 to 8010 (VMGK…TKQA), 8078 to 8137 (IMGE…IDTF), 8205 to 8264 (AMKS…IQGL), 8332 to 8391 (AMKD…VLGL), 8459 to 8518 (KMKL…IQHL), and 8587 to 8643 (AMQG…ANII). Residues 9306–9324 (TVGVITLTGLLSSFWLVLA) form a helical membrane-spanning segment. Composition is skewed to basic and acidic residues over residues 9363 to 9375 (DKEEQIQNDDKHS), 9386 to 9395 (EKQLSEEDIH), and 9404 to 9413 (QNSDNKDTKQ). The disordered stretch occupies residues 9363–9439 (DKEEQIQNDD…VVKTKKRSKK (77 aa)). The segment covering 9414-9439 (KKVTSKKKKTPQSTKKVVKTKKRSKK) has biased composition (basic residues).

It is found in the cell membrane. The chain is Extracellular matrix-binding protein ebh (ebh) from Staphylococcus epidermidis (strain ATCC 35984 / DSM 28319 / BCRC 17069 / CCUG 31568 / BM 3577 / RP62A).